The chain runs to 131 residues: D-ribose pyranase (131 aa).

H20 (proton donor) is an active-site residue. Substrate is bound by residues D28, H98, and 120 to 122; that span reads FSN.

It belongs to the RbsD / FucU family. RbsD subfamily. In terms of assembly, homodecamer.

It is found in the cytoplasm. It catalyses the reaction beta-D-ribopyranose = beta-D-ribofuranose. Its pathway is carbohydrate metabolism; D-ribose degradation; D-ribose 5-phosphate from beta-D-ribopyranose: step 1/2. In terms of biological role, catalyzes the interconversion of beta-pyran and beta-furan forms of D-ribose. The polypeptide is D-ribose pyranase (Petrotoga mobilis (strain DSM 10674 / SJ95)).